The primary structure comprises 218 residues: Glutathione S-transferase D7 (218 aa).

Positions 1-82 (MTPVLYYLPP…YLVSAYGKDE (82 aa)) constitute a GST N-terminal domain. Glutathione-binding positions include serine 11, 52-54 (HCI), and 66-68 (ESR). The GST C-terminal domain maps to 88-207 (DFRSRAIVDQ…KEINETGAET (120 aa)).

This sequence belongs to the GST superfamily. Theta family. As to quaternary structure, homodimer.

The enzyme catalyses RX + glutathione = an S-substituted glutathione + a halide anion + H(+). Conjugation of reduced glutathione to a wide number of exogenous and endogenous hydrophobic electrophiles. The sequence is that of Glutathione S-transferase D7 from Anopheles gambiae (African malaria mosquito).